The chain runs to 945 residues: Alanine--tRNA ligase (945 aa).

H564, H568, C666, and H670 together coordinate Zn(2+). Positions 911–945 (SGGGRPDMAQAGGKDASKLPEALQQARETMTEKLG) are disordered.

This sequence belongs to the class-II aminoacyl-tRNA synthetase family. The cofactor is Zn(2+).

It localises to the cytoplasm. The catalysed reaction is tRNA(Ala) + L-alanine + ATP = L-alanyl-tRNA(Ala) + AMP + diphosphate. Its function is as follows. Catalyzes the attachment of alanine to tRNA(Ala) in a two-step reaction: alanine is first activated by ATP to form Ala-AMP and then transferred to the acceptor end of tRNA(Ala). Also edits incorrectly charged Ser-tRNA(Ala) and Gly-tRNA(Ala) via its editing domain. The protein is Alanine--tRNA ligase of Rhodopirellula baltica (strain DSM 10527 / NCIMB 13988 / SH1).